Reading from the N-terminus, the 106-residue chain is Pyrimidine/purine nucleoside phosphorylase (106 aa).

Belongs to the nucleoside phosphorylase PpnP family.

It carries out the reaction a purine D-ribonucleoside + phosphate = a purine nucleobase + alpha-D-ribose 1-phosphate. The enzyme catalyses adenosine + phosphate = alpha-D-ribose 1-phosphate + adenine. The catalysed reaction is cytidine + phosphate = cytosine + alpha-D-ribose 1-phosphate. It catalyses the reaction guanosine + phosphate = alpha-D-ribose 1-phosphate + guanine. It carries out the reaction inosine + phosphate = alpha-D-ribose 1-phosphate + hypoxanthine. The enzyme catalyses thymidine + phosphate = 2-deoxy-alpha-D-ribose 1-phosphate + thymine. The catalysed reaction is uridine + phosphate = alpha-D-ribose 1-phosphate + uracil. It catalyses the reaction xanthosine + phosphate = alpha-D-ribose 1-phosphate + xanthine. In terms of biological role, catalyzes the phosphorolysis of diverse nucleosides, yielding D-ribose 1-phosphate and the respective free bases. Can use uridine, adenosine, guanosine, cytidine, thymidine, inosine and xanthosine as substrates. Also catalyzes the reverse reactions. The sequence is that of Pyrimidine/purine nucleoside phosphorylase from Burkholderia vietnamiensis (strain G4 / LMG 22486) (Burkholderia cepacia (strain R1808)).